Consider the following 225-residue polypeptide: MTTSSFVVYDFDTPLFEDIVKERINRFVVITQSGKLCHLHDPGRLKELIYPGNRILIREHKGRKTNYMVLAAHSGTGWVVTDSSIHNKIARNFLPSDVKSEVKVNNSRLDFYYDNTFVEVKGCSLVVDGKALFPDAPTERGKRHLEELIKLKMQGYRSLILILVMRDDAICFSPNWKTDKKFSMAFKNAVEEGVEVTIKLLKLIDNKIWYIKDIQLCPDAFNYSH.

This sequence belongs to the SfsA family.

In Sulfolobus acidocaldarius (strain ATCC 33909 / DSM 639 / JCM 8929 / NBRC 15157 / NCIMB 11770), this protein is Sugar fermentation stimulation protein homolog.